The sequence spans 340 residues: MSKPIILTGDRPTGKLHLGHYVGSLKNRVLLQNENKYEMFVFLADQQALTDHAKESEIIKDSIANVALDYLSVGLDPEKVTIFIQSQIPELAELTMYYMNLVSLARLERNPTVKTEIAQKGFGESIPTGFLVYPISQAADITAFKANYVPVGNDQKPMIEQTREIVRSFNHTYKTNCLVEPEGIYPKNEAAGRLPGLDGNAKMSKSLGNGIFLSDDADTVRKKVMSMYTDPNHIRVEDPGQIEGNMVFHYLDIFGRKEDQTDIAAMKEHYQSGGLGDVKTKHYLLDILERELTPIRRRRLEYEKNMDQVLDILKKGSETARETASETLSGVKRAMGINYF.

ATP contacts are provided by residues 11–13 and 19–20; these read RPT and GH. The short motif at 12 to 20 is the 'HIGH' region element; the sequence is PTGKLHLGH. Asp-140 contacts L-tryptophan. ATP is bound by residues 152 to 154, Leu-194, and 202 to 206; these read GND and KMSKS. Residues 202–206 carry the 'KMSKS' region motif; the sequence is KMSKS.

This sequence belongs to the class-I aminoacyl-tRNA synthetase family. In terms of assembly, homodimer.

It localises to the cytoplasm. It carries out the reaction tRNA(Trp) + L-tryptophan + ATP = L-tryptophyl-tRNA(Trp) + AMP + diphosphate + H(+). Functionally, catalyzes the attachment of tryptophan to tRNA(Trp). The polypeptide is Tryptophan--tRNA ligase (Streptococcus mutans serotype c (strain ATCC 700610 / UA159)).